Here is a 280-residue protein sequence, read N- to C-terminus: Phosphatidylserine decarboxylase proenzyme (280 aa).

Active-site charge relay system; for autoendoproteolytic cleavage activity residues include aspartate 88, histidine 145, and serine 248. Residue serine 248 is the Schiff-base intermediate with substrate; via pyruvic acid; for decarboxylase activity of the active site. At serine 248 the chain carries Pyruvic acid (Ser); by autocatalysis.

The protein belongs to the phosphatidylserine decarboxylase family. PSD-B subfamily. Prokaryotic type I sub-subfamily. Heterodimer of a large membrane-associated beta subunit and a small pyruvoyl-containing alpha subunit. It depends on pyruvate as a cofactor. Post-translationally, is synthesized initially as an inactive proenzyme. Formation of the active enzyme involves a self-maturation process in which the active site pyruvoyl group is generated from an internal serine residue via an autocatalytic post-translational modification. Two non-identical subunits are generated from the proenzyme in this reaction, and the pyruvate is formed at the N-terminus of the alpha chain, which is derived from the carboxyl end of the proenzyme. The autoendoproteolytic cleavage occurs by a canonical serine protease mechanism, in which the side chain hydroxyl group of the serine supplies its oxygen atom to form the C-terminus of the beta chain, while the remainder of the serine residue undergoes an oxidative deamination to produce ammonia and the pyruvoyl prosthetic group on the alpha chain. During this reaction, the Ser that is part of the protease active site of the proenzyme becomes the pyruvoyl prosthetic group, which constitutes an essential element of the active site of the mature decarboxylase.

Its subcellular location is the cell membrane. The catalysed reaction is a 1,2-diacyl-sn-glycero-3-phospho-L-serine + H(+) = a 1,2-diacyl-sn-glycero-3-phosphoethanolamine + CO2. The protein operates within phospholipid metabolism; phosphatidylethanolamine biosynthesis; phosphatidylethanolamine from CDP-diacylglycerol: step 2/2. In terms of biological role, catalyzes the formation of phosphatidylethanolamine (PtdEtn) from phosphatidylserine (PtdSer). In Methylobacillus flagellatus (strain ATCC 51484 / DSM 6875 / VKM B-1610 / KT), this protein is Phosphatidylserine decarboxylase proenzyme.